A 356-amino-acid chain; its full sequence is Histidinol-phosphate aminotransferase (356 aa).

An N6-(pyridoxal phosphate)lysine modification is found at Lys-214.

The protein belongs to the class-II pyridoxal-phosphate-dependent aminotransferase family. Histidinol-phosphate aminotransferase subfamily. In terms of assembly, homodimer. Pyridoxal 5'-phosphate serves as cofactor.

The catalysed reaction is L-histidinol phosphate + 2-oxoglutarate = 3-(imidazol-4-yl)-2-oxopropyl phosphate + L-glutamate. It participates in amino-acid biosynthesis; L-histidine biosynthesis; L-histidine from 5-phospho-alpha-D-ribose 1-diphosphate: step 7/9. This is Histidinol-phosphate aminotransferase from Aromatoleum aromaticum (strain DSM 19018 / LMG 30748 / EbN1) (Azoarcus sp. (strain EbN1)).